Consider the following 344-residue polypeptide: DNA-directed RNA polymerase subunit alpha (344 aa).

Positions 1 to 238 are alpha N-terminal domain (alpha-NTD); the sequence is MKVIKTAPLI…KQLGVFGEKP (238 aa). Positions 253–344 are alpha C-terminal domain (alpha-CTD); that stretch reads DAKDLSAKIE…EKLEDKGGND (92 aa).

This sequence belongs to the RNA polymerase alpha chain family. Homodimer. The RNAP catalytic core consists of 2 alpha, 1 beta, 1 beta' and 1 omega subunit. When a sigma factor is associated with the core the holoenzyme is formed, which can initiate transcription.

It catalyses the reaction RNA(n) + a ribonucleoside 5'-triphosphate = RNA(n+1) + diphosphate. Its function is as follows. DNA-dependent RNA polymerase catalyzes the transcription of DNA into RNA using the four ribonucleoside triphosphates as substrates. This chain is DNA-directed RNA polymerase subunit alpha, found in Helicobacter acinonychis (strain Sheeba).